The primary structure comprises 733 residues: Protein PAT1 homolog 2 (733 aa).

2 disordered regions span residues 42–75 and 337–366; these read LDQESDEEPVKLEDDHTKPIQMPEAPKEEEPEAL and LHPQHRRILSQRQRPQSSSRRQWESRPDPY. The segment covering 49–59 has biased composition (basic and acidic residues); sequence EPVKLEDDHTK. A compositionally biased stretch (low complexity) spans 346–356; sequence SQRQRPQSSSR.

Belongs to the PAT1 family. As to quaternary structure, interacts with ribonucleoprotein complex components. Interacts with cpeb. As to expression, oocyte-specific protein. Expressed throughout oogenesis but is not detectable in eggs, embryos, nor in adult tissues (at protein level).

The protein localises to the cytoplasm. The protein resides in the nucleus. RNA-binding protein that acts as a translational repressor. When overexpressed, able to disperse P-bodies. The protein is Protein PAT1 homolog 2 (patl2) of Xenopus laevis (African clawed frog).